We begin with the raw amino-acid sequence, 83 residues long: Mitochondrial import inner membrane translocase subunit Tim8 B (83 aa).

Ala-2 is subject to N-acetylalanine. Positions Cys-36–Cys-59 match the Twin CX3C motif motif. 2 disulfides stabilise this stretch: Cys-36–Cys-59 and Cys-40–Cys-55.

This sequence belongs to the small Tim family. As to quaternary structure, heterohexamer; possibly composed of 3 copies of TIMM8B and 3 copies of TIMM13, named soluble 70 kDa complex. Associates with the TIM22 complex, whose core is composed of TIMM22. In terms of tissue distribution, ubiquitous, with highest expression in heart, kidney, liver and skeletal muscle.

The protein resides in the mitochondrion inner membrane. In terms of biological role, probable mitochondrial intermembrane chaperone that participates in the import and insertion of some multi-pass transmembrane proteins into the mitochondrial inner membrane. Also required for the transfer of beta-barrel precursors from the TOM complex to the sorting and assembly machinery (SAM complex) of the outer membrane. Acts as a chaperone-like protein that protects the hydrophobic precursors from aggregation and guide them through the mitochondrial intermembrane space. This chain is Mitochondrial import inner membrane translocase subunit Tim8 B (TIMM8B), found in Homo sapiens (Human).